A 90-amino-acid chain; its full sequence is Putative membrane protein insertion efficiency factor (90 aa).

The segment at 68-90 is disordered; it reads VPAHFSLRRNPQYKEEDHRGKKR. A compositionally biased stretch (basic and acidic residues) spans 79-90; the sequence is QYKEEDHRGKKR.

The protein belongs to the UPF0161 family.

Its subcellular location is the cell membrane. Could be involved in insertion of integral membrane proteins into the membrane. This chain is Putative membrane protein insertion efficiency factor, found in Lactiplantibacillus plantarum (strain ATCC BAA-793 / NCIMB 8826 / WCFS1) (Lactobacillus plantarum).